The primary structure comprises 500 residues: Na(+)/H(+) antiporter NhaB (500 aa).

13 helical membrane passes run 11-31 (HGFL…FLVL), 34-54 (LLLV…EFIF), 58-78 (MALK…ALLL), 96-116 (VILL…LLLF), 129-149 (AILS…LDAL), 150-170 (TVTA…HRVA), 205-225 (LLMH…VGEP), 241-261 (FFFK…LTCV), 311-331 (ILII…LMVI), 350-370 (FQDA…VAVI), 394-414 (MLYL…VATI), 450-470 (ATPN…APLI), and 477-497 (MVWM…WAVT).

Belongs to the NhaB Na(+)/H(+) (TC 2.A.34) antiporter family.

It localises to the cell inner membrane. The enzyme catalyses 2 Na(+)(in) + 3 H(+)(out) = 2 Na(+)(out) + 3 H(+)(in). Functionally, na(+)/H(+) antiporter that extrudes sodium in exchange for external protons. In Pseudomonas putida (strain GB-1), this protein is Na(+)/H(+) antiporter NhaB.